A 296-amino-acid polypeptide reads, in one-letter code: Putative peptide transport system permease protein BruAb2_1032 (296 aa).

6 consecutive transmembrane segments (helical) span residues 35–55 (IGLV…WITN), 97–117 (LWIG…IGIA), 131–151 (VMDA…SAAL), 205–225 (ILPN…AYAI), 229–249 (ATLS…GSIV), and 260–280 (WWIM…INLI). In terms of domain architecture, ABC transmembrane type-1 spans 97–281 (LWIGLTVAVL…ISALAINLIG (185 aa)).

The protein belongs to the binding-protein-dependent transport system permease family. As to quaternary structure, the complex is composed of two ATP-binding proteins (BruAb2_1033 and BruAb2_1034), two transmembrane proteins (BruAb2_1031 and BruAb2_1032) and a solute-binding protein (BruAb2_1030).

It localises to the cell inner membrane. Probably part of an ABC transporter complex that could be involved in peptide import. Probably responsible for the translocation of the substrate across the membrane. This Brucella abortus biovar 1 (strain 9-941) protein is Putative peptide transport system permease protein BruAb2_1032.